The following is a 562-amino-acid chain: Phosphatidylinositol 4-phosphate 5-kinase type-1 alpha (562 aa).

The PIPK domain occupies Thr-81–Val-449. Lys-103 is covalently cross-linked (Glycyl lysine isopeptide (Lys-Gly) (interchain with G-Cter in ubiquitin)). Ser-486 carries the post-translational modification Phosphoserine. The interval His-506–Ser-526 is disordered.

As to quaternary structure, interacts with RAC1. Interacts with TUT1. Forms a complex with CDH1/E-cadherin, CTNNB1/beta-catenin and CTNND1 at the plasma membrane upon calcium stimulation. Found in a ternary complex with IRS1 and DGKZ in the absence of insulin stimulation. Interacts with DGKZ. Interacts with PIP4K2C; the interaction inhibits PIP5K1A kinase activity. In terms of tissue distribution, highly expressed in heart, placenta, skeletal muscle, kidney and pancreas. Detected at lower levels in brain, lung and liver.

It is found in the cell membrane. Its subcellular location is the cytoplasm. It localises to the nucleus. The protein resides in the nucleus speckle. The protein localises to the cell projection. It is found in the ruffle. Its subcellular location is the lamellipodium. The enzyme catalyses a 1,2-diacyl-sn-glycero-3-phospho-(1D-myo-inositol 4-phosphate) + ATP = a 1,2-diacyl-sn-glycero-3-phospho-(1D-myo-inositol-4,5-bisphosphate) + ADP + H(+). It carries out the reaction 1-octadecanoyl-2-(5Z,8Z,11Z,14Z)-eicosatetraenoyl-sn-glycero-3-phospho-1D-myo-inositol 4-phosphate + ATP = 1-octadecanoyl-2-(5Z,8Z,11Z,14Z)-eicosatetraenoyl-sn-glycero-3-phospho-1D-myo-inositol 4,5-bisphosphate + ADP + H(+). The catalysed reaction is 1,2-dihexadecanoyl-sn-glycero-3-phospho-(1D-myo-inositol-4-phosphate) + ATP = 1,2-dihexadecanoyl-sn-glycero-3-phospho-(1D-myo-inositol-4,5-bisphosphate) + ADP + H(+). It catalyses the reaction 1-octadecanoyl-2-(9Z)-octadecenoyl-sn-glycero-3-phospho-1D-myo-inositol 4-phosphate + ATP = 1-octadecanoyl-2-(9Z)-octadecenoyl-sn-glycero-3-phospho-1D-myo-inositol 4,5-bisphosphate + ADP + H(+). The enzyme catalyses 1-octadecanoyl-2-(9Z)-octadecenoyl-sn-glycero-3-phospho-1D-myo-inositol + ATP = 1-octadecanoyl-2-(9Z)-octadecenoyl-sn-glycero-3-phospho-1D-myo-inositol 5-phosphate + ADP + H(+). It carries out the reaction 1-octadecanoyl-2-(9Z,12Z)-octadecadienoyl-sn-glycero-3-phospho-1D-myo-inositol + ATP = 1-octadecanoyl-2-(9Z,12Z)-octadecadienoyl-sn-glycero-3-phospho-1D-myo-inositol 5-phosphate + ADP + H(+). The catalysed reaction is 1-octadecanoyl-2-(5Z,8Z,11Z,14Z-eicosatetraenoyl)-sn-glycero-3-phospho-(1D-myo-inositol) + ATP = 1-octadecanoyl-2-(5Z,8Z,11Z,14Z)-eicosatetraenoyl-sn-glycero-3-phospho-1D-myo-inositol 5-phosphate + ADP + H(+). It catalyses the reaction 1,2-di-(9Z,12Z)-octadecadienoyl-sn-glycero-3-phospho-1D-myo-inositol + ATP = 1,2-di(9Z,12Z)-octadecadienoyl-sn-glycero-3-phospho-1D-myo-inositol 5-phosphate + ADP + H(+). With respect to regulation, activated by diarachidonoyl phosphatidic acid (DAPA), when 1,2-dipalmitoyl-PI4P is used as a substrate. Catalyzes the phosphorylation of phosphatidylinositol 4-phosphate (PtdIns(4)P/PI4P) to form phosphatidylinositol 4,5-bisphosphate (PtdIns(4,5)P2/PIP2), a lipid second messenger that regulates several cellular processes such as signal transduction, vesicle trafficking, actin cytoskeleton dynamics, cell adhesion, and cell motility. PtdIns(4,5)P2 can directly act as a second messenger or can be utilized as a precursor to generate other second messengers: inositol 1,4,5-trisphosphate (IP3), diacylglycerol (DAG) or phosphatidylinositol-3,4,5-trisphosphate (PtdIns(3,4,5)P3/PIP3). PIP5K1A-mediated phosphorylation of PtdIns(4)P is the predominant pathway for PtdIns(4,5)P2 synthesis. Can also use phosphatidylinositol (PtdIns) as substrate in vitro. Together with PIP5K1C, is required for phagocytosis, both enzymes regulating different types of actin remodeling at sequential steps. Promotes particle ingestion by activating the WAS GTPase-binding protein that induces Arp2/3 dependent actin polymerization at the nascent phagocytic cup. Together with PIP5K1B, is required, after stimulation by G-protein coupled receptors, for the synthesis of IP3 that will induce stable platelet adhesion. Recruited to the plasma membrane by the E-cadherin/beta-catenin complex where it provides the substrate PtdIns(4,5)P2 for the production of PtdIns(3,4,5)P3, IP3 and DAG, that will mobilize internal calcium and drive keratinocyte differentiation. Positively regulates insulin-induced translocation of SLC2A4 to the cell membrane in adipocytes. Together with PIP5K1C has a role during embryogenesis. Independently of its catalytic activity, is required for membrane ruffling formation, actin organization and focal adhesion formation during directional cell migration by controlling integrin-induced translocation of the small GTPase RAC1 to the plasma membrane. Also functions in the nucleus where it acts as an activator of TUT1 adenylyltransferase activity in nuclear speckles, thereby regulating mRNA polyadenylation of a select set of mRNAs. The polypeptide is Phosphatidylinositol 4-phosphate 5-kinase type-1 alpha (Homo sapiens (Human)).